A 175-amino-acid chain; its full sequence is Cell division protein SepF (175 aa).

Residues 20-29 are compositionally biased toward acidic residues; sequence RYEDYDDYDD. Positions 20–88 are disordered; it reads RYEDYDDYDD…ERPTPPLRVT (69 aa). Basic and acidic residues-rich tracts occupy residues 30–47 and 54–73; these read AEPH…DLGS and RRMD…RRVS.

It belongs to the SepF family. In terms of assembly, homodimer. Interacts with FtsZ.

It localises to the cytoplasm. Its function is as follows. Cell division protein that is part of the divisome complex and is recruited early to the Z-ring. Probably stimulates Z-ring formation, perhaps through the cross-linking of FtsZ protofilaments. Its function overlaps with FtsA. The sequence is that of Cell division protein SepF from Acidothermus cellulolyticus (strain ATCC 43068 / DSM 8971 / 11B).